A 396-amino-acid polypeptide reads, in one-letter code: Ribosomal RNA large subunit methyltransferase I (396 aa).

The PUA domain occupies 2–79; that stretch reads AVRIKLKPGR…REEEIDREFF (78 aa).

It belongs to the methyltransferase superfamily. RlmI family.

It localises to the cytoplasm. It catalyses the reaction cytidine(1962) in 23S rRNA + S-adenosyl-L-methionine = 5-methylcytidine(1962) in 23S rRNA + S-adenosyl-L-homocysteine + H(+). Functionally, specifically methylates the cytosine at position 1962 (m5C1962) of 23S rRNA. This is Ribosomal RNA large subunit methyltransferase I from Shewanella sp. (strain MR-4).